The sequence spans 290 residues: 33 kDa chaperonin (290 aa).

2 disulfide bridges follow: cysteine 235-cysteine 237 and cysteine 268-cysteine 271.

It belongs to the HSP33 family. In terms of processing, under oxidizing conditions two disulfide bonds are formed involving the reactive cysteines. Under reducing conditions zinc is bound to the reactive cysteines and the protein is inactive.

It is found in the cytoplasm. Functionally, redox regulated molecular chaperone. Protects both thermally unfolding and oxidatively damaged proteins from irreversible aggregation. Plays an important role in the bacterial defense system toward oxidative stress. The sequence is that of 33 kDa chaperonin from Streptococcus gordonii (strain Challis / ATCC 35105 / BCRC 15272 / CH1 / DL1 / V288).